Consider the following 150-residue polypeptide: Large ribosomal subunit protein bL9 (150 aa).

This sequence belongs to the bacterial ribosomal protein bL9 family.

Functionally, binds to the 23S rRNA. The polypeptide is Large ribosomal subunit protein bL9 (Paracidovorax citrulli (strain AAC00-1) (Acidovorax citrulli)).